Reading from the N-terminus, the 552-residue chain is MEKVKQTIRAPRGTELQTKGWVQEAALRMLMNNLDPEVAEKPEELVVYGGIGRAARNWESYNAIVDSLKTLESDETLLVQSGKPVAIFKSHEDAPRVLLANSNLVPKWANWNHFRELEKKGLMMYGQMTAGSWIYIGTQGILQGTYETFGEAARQHFGGSLKGTLTLTAGLGGMGGAQPLAVTMNGGVVIAIDVDKRSIDRRIEKRYCDMYTESLEEALTVANEYKEKKEPISIGLLGNAAEILPELVKRNITPDLVTDQTSAHDPLNGYIPVGYTLEEAAKLREEDPERYVQLSKESMTKHVEAMLAMQAKGAITFDYGNNIRQVAFDEGLKNAFDFPGFVPAFIRPLFCEGKGPFRWVALSGDPEDIYKTDEVILREFADNEHLCNWIRMARQQVEFQGLPSRICWLGYGERAKFGRIINEMVANGELSAPIVIGRDHLDCGSVASPNRETEAMKDGSDAVADWPILNALINSVNGASWVSVHHGGGVGMGYSLHAGMVIVADGTEAAAKRIERVLTSDPGMGVVRHVDAGYDLAVETAKEKGVNIPMMK.

NAD(+) is bound by residues 49–50 (GG), glutamine 127, 173–175 (GMG), aspartate 193, 239–240 (NA), 260–264 (QTSAH), 270–271 (YI), and tyrosine 319. Residue cysteine 407 is part of the active site. Glycine 489 is a binding site for NAD(+).

Belongs to the urocanase family. NAD(+) serves as cofactor.

The protein resides in the cytoplasm. The enzyme catalyses 4-imidazolone-5-propanoate = trans-urocanate + H2O. It functions in the pathway amino-acid degradation; L-histidine degradation into L-glutamate; N-formimidoyl-L-glutamate from L-histidine: step 2/3. In terms of biological role, catalyzes the conversion of urocanate to 4-imidazolone-5-propionate. This Bacillus cereus (strain ATCC 10987 / NRS 248) protein is Urocanate hydratase.